The sequence spans 290 residues: N-acetylmannosamine kinase (290 aa).

ATP-binding positions include 5–12 (AIDIGGTK) and 132–139 (GVGGGVVS). Residues histidine 156, cysteine 166, cysteine 168, and cysteine 173 each coordinate Zn(2+).

It belongs to the ROK (NagC/XylR) family. NanK subfamily. Homodimer.

The enzyme catalyses an N-acyl-D-mannosamine + ATP = an N-acyl-D-mannosamine 6-phosphate + ADP + H(+). It functions in the pathway amino-sugar metabolism; N-acetylneuraminate degradation; D-fructose 6-phosphate from N-acetylneuraminate: step 2/5. In terms of biological role, catalyzes the phosphorylation of N-acetylmannosamine (ManNAc) to ManNAc-6-P. The polypeptide is N-acetylmannosamine kinase (Citrobacter koseri (strain ATCC BAA-895 / CDC 4225-83 / SGSC4696)).